We begin with the raw amino-acid sequence, 1015 residues long: MESYLNSNFDVKAKHSSEEVLEKWRNLCSVVKNPKRRFRFTANLSKRYEAAAMRRTNQEKLRIAVLVSKAAFQFISGVSPSDYKVPEEVKAAGFDICADELGSIVEGHDVKKLKFHGGVDGLSGKLKACPNAGLSTGEPEQLSKRQELFGINKFAESELRSFWVFVWEALQDMTLMILGVCAFVSLIVGIATEGWPQGSHDGLGIVASILLVVFVTATSDYRQSLQFRDLDKEKKKITVQVTRNGFRQKMSIYDLLPGDVVHLAIGDQVPADGLFLSGFSVVIDESSLTGESEPVMVTAQNPFLLSGTKVQDGSCKMLVTTVGMRTQWGKLMATLSEGGDDETPLQVKLNGVATIIGKIGLSFAIVTFAVLVQGMFMRKLSLGPHWWWSGDDALELLEYFAIAVTIVVVAVPEGLPLAVTLSLAFAMKKMMNDKALVRHLAACETMGSATTICSDKTGTLTTNHMTVVKSCICMNVQDVASKSSSLQSDIPEAALKLLLQLIFNNTGGEVVVNERGKTEILGTPTETAILELGLSLGGKFQEERQSNKVIKVEPFNSTKKRMGVVIELPEGGRIRAHTKGASEIVLAACDKVINSSGEVVPLDDESIKFLNVTIDEFANEALRTLCLAYMDIESGFSADEGIPEKGFTCIGIVGIKDPVRPGVRESVELCRRAGIMVRMVTGDNINTAKAIARECGILTDDGIAIEGPVFREKNQEEMLELIPKIQVMARSSPMDKHTLVKQLRTTFDEVVAVTGDGTNDAPALHEADIGLAMGIAGTEVAKEIADVIILDDNFSTIVTVAKWGRSVYINIQKFVQFQLTVNVVALIVNFSSACLTGSAPLTAVQLLWVNMIMDTLGALALATEPPNNELMKRMPVGRRGNFITNAMWRNILGQAVYQFIIIWILQAKGKSMFGLVGSDSTLVLNTLIFNCFVFCQVFNEVSSREMEEIDVFKGILDNYVFVVVIGATVFFQIIIIEFLGTFASTTPLTIVQWFFSIFVGFLGMPIAAGLKKIPV.

Met-1 is subject to N-acetylmethionine. Residues Met-1–Ser-161 lie on the Cytoplasmic side of the membrane. Residues Val-20 to Val-31 form an interaction with calmodulin region. Residue Ser-45 is modified to Phosphoserine; by CPK. The chain crosses the membrane as a helical span at residues Phe-162–Ala-182. Residues Phe-183–His-200 are Lumenal-facing. A helical transmembrane segment spans residues Asp-201–Tyr-221. The Cytoplasmic segment spans residues Arg-222–Leu-349. The chain crosses the membrane as a helical span at residues Asn-350 to Ala-369. The Lumenal portion of the chain corresponds to Val-370–Tyr-399. The helical transmembrane segment at Phe-400–Leu-417 threads the bilayer. At Ala-418–Ile-811 the chain is on the cytoplasmic side. Asp-455 functions as the 4-aspartylphosphate intermediate in the catalytic mechanism. Mg(2+) is bound by residues Asp-756 and Asp-760. The helical transmembrane segment at Gln-812 to Phe-830 threads the bilayer. Over Ser-831 to Leu-841 the chain is Lumenal. Residues Thr-842–Ala-862 traverse the membrane as a helical segment. The Cytoplasmic portion of the chain corresponds to Thr-863 to Phe-882. Residues Ile-883–Leu-905 form a helical membrane-spanning segment. Residues Gln-906 to Gly-917 lie on the Lumenal side of the membrane. A helical transmembrane segment spans residues Ser-918–Asn-939. Over Glu-940–Asp-957 the chain is Cytoplasmic. The helical transmembrane segment at Asn-958–Leu-979 threads the bilayer. The Lumenal segment spans residues Gly-980 to Thr-989. A helical transmembrane segment spans residues Ile-990 to Lys-1011. Residues Lys-1012–Val-1015 are Cytoplasmic-facing.

Belongs to the cation transport ATPase (P-type) (TC 3.A.3) family. Type IIB subfamily.

It is found in the membrane. It catalyses the reaction Ca(2+)(in) + ATP + H2O = Ca(2+)(out) + ADP + phosphate + H(+). Its activity is regulated as follows. Activated by calmodulin. Functionally, this magnesium-dependent enzyme catalyzes the hydrolysis of ATP coupled with the translocation of calcium from the cytosol out of the cell or into organelles. This is Putative calcium-transporting ATPase 7, plasma membrane-type (ACA7) from Arabidopsis thaliana (Mouse-ear cress).